The following is a 618-amino-acid chain: Protease 4 (618 aa).

The Cytoplasmic segment spans residues M1–E24. The chain crosses the membrane as a helical span at residues M25–V45. Topologically, residues S46–R618 are periplasmic. K209 acts as the Proton donor/acceptor in catalysis. Catalysis depends on S409, which acts as the Nucleophile.

This sequence belongs to the peptidase S49 family. As to quaternary structure, homotetramer.

The protein localises to the cell inner membrane. Inhibited by serine hydrolase inhibitor FP-biotin and by antipain. Digests cleaved signal peptides in vitro, its in vivo function is unknown. This activity is necessary to maintain proper secretion of mature proteins across the membrane. The protein is Protease 4 (sppA) of Escherichia coli (strain K12).